We begin with the raw amino-acid sequence, 119 residues long: Beta-2-microglobulin (119 aa).

An N-terminal signal peptide occupies residues 1-20 (MACSVVVALLALLSLSGLEA). Residues 25 to 114 (PKIQVYSRHP…VTFSTPKTVK (90 aa)) form the Ig-like C1-type domain. Cysteines 45 and 100 form a disulfide.

The protein belongs to the beta-2-microglobulin family. As to quaternary structure, heterodimer of an alpha chain and a beta chain. Beta-2-microglobulin is the beta-chain of major histocompatibility complex class I molecules.

Its subcellular location is the secreted. Component of the class I major histocompatibility complex (MHC). Involved in the presentation of peptide antigens to the immune system. The polypeptide is Beta-2-microglobulin (B2M) (Mico emiliae (Emilia's marmoset)).